The primary structure comprises 193 residues: Peptidyl-tRNA hydrolase (193 aa).

Tyr-15 lines the tRNA pocket. Residue His-20 is the Proton acceptor of the active site. TRNA-binding residues include Phe-65, Asn-67, and Asn-113.

Belongs to the PTH family. As to quaternary structure, monomer.

It is found in the cytoplasm. It catalyses the reaction an N-acyl-L-alpha-aminoacyl-tRNA + H2O = an N-acyl-L-amino acid + a tRNA + H(+). Its function is as follows. Hydrolyzes ribosome-free peptidyl-tRNAs (with 1 or more amino acids incorporated), which drop off the ribosome during protein synthesis, or as a result of ribosome stalling. In terms of biological role, catalyzes the release of premature peptidyl moieties from peptidyl-tRNA molecules trapped in stalled 50S ribosomal subunits, and thus maintains levels of free tRNAs and 50S ribosomes. The sequence is that of Peptidyl-tRNA hydrolase from Ehrlichia ruminantium (strain Welgevonden).